The chain runs to 523 residues: Metalloprotease TIKI2 (523 aa).

The signal sequence occupies residues 1-26 (MGKTMWARAVFLCFSVGTLLWQEVLT). Topologically, residues 27–499 (RRIPVDTGQC…HSQSNSSPKC (473 aa)) are extracellular. Residues asparagine 225, asparagine 234, asparagine 283, and asparagine 341 are each glycosylated (N-linked (GlcNAc...) asparagine). Residues 500 to 516 (LSASPAFLYTLVTLCLI) traverse the membrane as a helical segment. Over 517-523 (TTMRTRS) the chain is Cytoplasmic.

It belongs to the TIKI family. It depends on Mn(2+) as a cofactor. Requires Co(2+) as cofactor.

It localises to the cell membrane. In terms of biological role, metalloprotease that acts as a negative regulator of the Wnt signaling pathway by mediating the cleavage of the N-terminal residues of a subset of Wnt proteins. Following cleavage, Wnt proteins become oxidized and form large disulfide-bond oligomers, leading to their inactivation. Able to cleave wnt8. Required for head formation. This is Metalloprotease TIKI2 (trabd2b) from Xenopus tropicalis (Western clawed frog).